A 213-amino-acid chain; its full sequence is 3-isopropylmalate dehydratase small subunit (213 aa).

Belongs to the LeuD family. LeuD type 1 subfamily. Heterodimer of LeuC and LeuD.

The catalysed reaction is (2R,3S)-3-isopropylmalate = (2S)-2-isopropylmalate. Its pathway is amino-acid biosynthesis; L-leucine biosynthesis; L-leucine from 3-methyl-2-oxobutanoate: step 2/4. Catalyzes the isomerization between 2-isopropylmalate and 3-isopropylmalate, via the formation of 2-isopropylmaleate. In Pseudomonas savastanoi pv. phaseolicola (strain 1448A / Race 6) (Pseudomonas syringae pv. phaseolicola (strain 1448A / Race 6)), this protein is 3-isopropylmalate dehydratase small subunit.